We begin with the raw amino-acid sequence, 103 residues long: MERENKPKGFSGFSWGIALFCLPILLWPLALTISPNLLKNPRLSETETTLMSVFLWAYPFGLALIARLAYRLNQHKPPFARGLLGLSAVAFYGMLFYVAGGFH.

Transmembrane regions (helical) follow at residues 12–34, 49–66, and 79–101; these read GFSW…LTIS, TLMS…ALIA, and FARG…VAGG.

It is found in the cell membrane. This is an uncharacterized protein from Pasteurella multocida (strain Pm70).